Here is a 443-residue protein sequence, read N- to C-terminus: Glutamate-1-semialdehyde 2,1-aminomutase (443 aa).

The residue at position 277 (lysine 277) is an N6-(pyridoxal phosphate)lysine.

The protein belongs to the class-III pyridoxal-phosphate-dependent aminotransferase family. HemL subfamily. As to quaternary structure, homodimer. Pyridoxal 5'-phosphate is required as a cofactor.

Its subcellular location is the cytoplasm. The catalysed reaction is (S)-4-amino-5-oxopentanoate = 5-aminolevulinate. It functions in the pathway porphyrin-containing compound metabolism; protoporphyrin-IX biosynthesis; 5-aminolevulinate from L-glutamyl-tRNA(Glu): step 2/2. In Pseudarthrobacter chlorophenolicus (strain ATCC 700700 / DSM 12829 / CIP 107037 / JCM 12360 / KCTC 9906 / NCIMB 13794 / A6) (Arthrobacter chlorophenolicus), this protein is Glutamate-1-semialdehyde 2,1-aminomutase.